Consider the following 205-residue polypeptide: MITSIFGKVTFVGKRKIIVEHNWISYWFNTKENHKFEKNLEKNKQIFCHIIKKIVANQIIEEAFAFNTLEEKEWFCRLIELNGIGSKTALNLLNNDLEEIKQYILENNYSALCGINGVNNKIARALLSLEIFEKSENNKNIKGVQVADGYDELFETLKSLGYKQQEIQDALKMIEVKPDFDISQLVAEVIKLMSFKNNEITNKTA.

The segment at 1–67 (MITSIFGKVT…QIIEEAFAFN (67 aa)) is domain I. Residues 68-146 (TLEEKEWFCR…NNKNIKGVQV (79 aa)) are domain II. A flexible linker region spans residues 147-150 (ADGY). Positions 150 to 205 (YDELFETLKSLGYKQQEIQDALKMIEVKPDFDISQLVAEVIKLMSFKNNEITNKTA) are domain III.

Belongs to the RuvA family. As to quaternary structure, homotetramer. Forms an RuvA(8)-RuvB(12)-Holliday junction (HJ) complex. HJ DNA is sandwiched between 2 RuvA tetramers; dsDNA enters through RuvA and exits via RuvB. An RuvB hexamer assembles on each DNA strand where it exits the tetramer. Each RuvB hexamer is contacted by two RuvA subunits (via domain III) on 2 adjacent RuvB subunits; this complex drives branch migration. In the full resolvosome a probable DNA-RuvA(4)-RuvB(12)-RuvC(2) complex forms which resolves the HJ.

It localises to the cytoplasm. Its function is as follows. The RuvA-RuvB-RuvC complex processes Holliday junction (HJ) DNA during genetic recombination and DNA repair, while the RuvA-RuvB complex plays an important role in the rescue of blocked DNA replication forks via replication fork reversal (RFR). RuvA specifically binds to HJ cruciform DNA, conferring on it an open structure. The RuvB hexamer acts as an ATP-dependent pump, pulling dsDNA into and through the RuvAB complex. HJ branch migration allows RuvC to scan DNA until it finds its consensus sequence, where it cleaves and resolves the cruciform DNA. The polypeptide is Holliday junction branch migration complex subunit RuvA (Mycoplasma genitalium (strain ATCC 33530 / DSM 19775 / NCTC 10195 / G37) (Mycoplasmoides genitalium)).